Consider the following 955-residue polypeptide: Glutamyl aminopeptidase (955 aa).

Over 1–17 (MDIEDKTSKMHCMKGKH) the chain is Cytoplasmic. The helical; Signal-anchor for type II membrane protein transmembrane segment at 18–38 (VVIICGVVIAVGLILGLGLGL) threads the bilayer. At 39 to 955 (GLDTKACNPP…LENSEHSNFA (917 aa)) the chain is on the extracellular side. N-linked (GlcNAc...) asparagine glycans are attached at residues Asn118 and Asn192. Glu218 is a binding site for substrate. Asn319 and Asn335 each carry an N-linked (GlcNAc...) asparagine glycan. 352–356 (GAMEN) provides a ligand contact to substrate. His388 contributes to the Zn(2+) binding site. Residue Glu389 is the Proton acceptor of the active site. 2 residues coordinate Zn(2+): His392 and Glu411. Residues Asn458, Asn547, Asn584, Asn592, Asn674, Asn759, Asn823, and Asn836 are each glycosylated (N-linked (GlcNAc...) asparagine). Arg882 provides a ligand contact to substrate.

It belongs to the peptidase M1 family. Homodimer; disulfide-linked. Zn(2+) is required as a cofactor. Post-translationally, N-glycosylated. Glycosylation counts for an increased mass of about 32% of the protein mass (about 48 kDa).

It is found in the cell membrane. The catalysed reaction is Release of N-terminal glutamate (and to a lesser extent aspartate) from a peptide.. With respect to regulation, substrate specificity is modulated by calcium which enhances the enzymatic activity for cleavage of acidic residues while reducing its activity with neutral and basic residues. Hydrolytic activity is inhibited by the aminopeptidase inhibitor (Leu and acidic inhibitor) amastatin, but not by bestatin (aminopeptidase inhibitor Leu inhibitor), leupeptin, pepstatin A and PMSF. Its hydrolytic activity is also strongly reduced by zinc ions, with a complete inhibition at 0.5 mM, and moderately inhibited by cobalt and copper ions. Its function is as follows. Venom protein that cleaves N-terminal acidic residues from peptides with high potency in presence of calcium. It may have several roles in venom including alteration of blood pressure by cleaving circulating angiotensin-2, general degradation of host tissue, increase of permeability to other venom components, and/or processing of other toxins in the venom. The protein is Glutamyl aminopeptidase of Bitis rhinoceros (West African gaboon viper).